The primary structure comprises 151 residues: Salivary C-type lectin 2 (151 aa).

The first 15 residues, 1-15, serve as a signal peptide directing secretion; that stretch reads MKLLLSFALLGLVAC. The C-type lectin domain maps to 25–147; the sequence is YCFPNEVATW…CTSKRRFVCE (123 aa). 2 disulfide bridges follow: cysteine 41/cysteine 146 and cysteine 118/cysteine 138.

Requires Ca(2+) as cofactor. As to expression, expressed in female salivary gland. Not detected or low-level expression in female midgut and fat body.

It is found in the secreted. Functionally, salivary protein with carbohydrate-binding activity. Binds to D-mannose, D-galactose, D-glucose and maltose. Agglutinates host erythrocytes. Probably participates in mosquito innate immune responses to prevent microorganism multiplication in sugar and blood meals. In terms of biological role, (Microbial infection) Binds to the surface of and agglutinates Escherichia coli in vitro. (Microbial infection) Binds to the surface of and agglutinates Pseudomonas aeruginosa in vitro. Its function is as follows. (Microbial infection) Binds to the surface of and agglutinates Bacillus subtilis in vitro. Functionally, (Microbial infection) Agglutinates Staphylococcus aureus in vitro. In terms of biological role, (Microbial infection) Agglutinates Candida albicans in vitro. (Microbial infection) Does not affect replication of dengue virus type 2 in host cells. In Aedes albopictus (Asian tiger mosquito), this protein is Salivary C-type lectin 2.